The primary structure comprises 99 residues: Beta-defensin 127 (99 aa).

The N-terminal stretch at 1–20 (MGLFMIIAILLFQKPTVTEQ) is a signal peptide. Cystine bridges form between Cys24–Cys53, Cys33–Cys47, and Cys37–Cys54. Positions 66–99 (ITKPPRPKPATLALTLQDYVTIIENFPSLKTQST) are excised as a propeptide.

This sequence belongs to the beta-defensin family.

It is found in the secreted. Its function is as follows. Has antibacterial activity. This chain is Beta-defensin 127 (DEFB127), found in Homo sapiens (Human).